The chain runs to 106 residues: Nucleoid-associated protein PD_1058 (106 aa).

This sequence belongs to the YbaB/EbfC family. Homodimer.

The protein localises to the cytoplasm. Its subcellular location is the nucleoid. In terms of biological role, binds to DNA and alters its conformation. May be involved in regulation of gene expression, nucleoid organization and DNA protection. The protein is Nucleoid-associated protein PD_1058 of Xylella fastidiosa (strain Temecula1 / ATCC 700964).